The sequence spans 688 residues: Elongation factor G (688 aa).

Residues 6-280 (KLFRNFGIMA…AVVDFLPSPI (275 aa)) form the tr-type G domain. Residues 15–22 (AHIDAGKT), 79–83 (DTPGH), and 133–136 (NKMD) contribute to the GTP site.

The protein belongs to the TRAFAC class translation factor GTPase superfamily. Classic translation factor GTPase family. EF-G/EF-2 subfamily.

It localises to the cytoplasm. Functionally, catalyzes the GTP-dependent ribosomal translocation step during translation elongation. During this step, the ribosome changes from the pre-translocational (PRE) to the post-translocational (POST) state as the newly formed A-site-bound peptidyl-tRNA and P-site-bound deacylated tRNA move to the P and E sites, respectively. Catalyzes the coordinated movement of the two tRNA molecules, the mRNA and conformational changes in the ribosome. This chain is Elongation factor G, found in Ureaplasma parvum serovar 3 (strain ATCC 27815 / 27 / NCTC 11736).